A 465-amino-acid polypeptide reads, in one-letter code: Ran-binding protein 3-like (465 aa).

The region spanning 276–417 is the RanBD1 domain; that stretch reads SQPSRKCLLE…ALQSFNKQRD (142 aa).

In terms of assembly, interacts with SMAD1, SMAD5 and SMAD8; the interaction (with SMAD at least) increases when SMAD1 is not phosphorylated and mediates SMAD1 nuclear export.

It is found in the nucleus. Its subcellular location is the cytoplasm. Functionally, nuclear export factor for BMP-specific SMAD1/5/8 that plays a critical role in terminating BMP signaling and regulating mesenchymal stem cell differentiation by blocking osteoblast differentiation to promote myogenic differention. Directly recognizes dephosphorylated SMAD1/5/8 and mediates their nuclear export in a Ran-dependent manner. This is Ran-binding protein 3-like (RANBP3L) from Homo sapiens (Human).